The chain runs to 496 residues: Signal recognition particle subunit SRP54 1 (496 aa).

Positions 1-296 (MVLAQLGGSI…DVKPFVSRLL (296 aa)) are G-domain. GTP contacts are provided by residues 108 to 115 (GLQGSGKT), 191 to 195 (DTSGR), and 249 to 252 (TKMD). Residues 297 to 496 (GMGDLSGLVN…MGMFGGGGGE (200 aa)) are M-domain.

The protein belongs to the GTP-binding SRP family. SRP54 subfamily. Component of a signal recognition particle (SRP) complex that consists of a 7SL RNA molecule of 300 nucleotides and six protein subunits: SRP72, SRP68, SRP54, SRP19, SRP14 and SRP9.

Its subcellular location is the cytoplasm. It is found in the endoplasmic reticulum. It catalyses the reaction GTP + H2O = GDP + phosphate + H(+). In terms of biological role, component of the signal recognition particle (SRP) complex, a ribonucleoprotein complex that mediates the cotranslational targeting of secretory and membrane proteins to the endoplasmic reticulum (ER). As part of the SRP complex, associates with the SRP receptor (SR) component SRPRA to target secretory proteins to the endoplasmic reticulum membrane. Binds to the signal sequence of presecretory proteins when they emerge from the ribosomes. Displays basal GTPase activity, and stimulates reciprocal GTPase activation of the SR subunit SRPRA. Forms a guanosine 5'-triphosphate (GTP)-dependent complex with the SR subunit SRPRA. SR compaction and GTPase mediated rearrangement of SR drive SRP-mediated cotranslational protein translocation into the ER. Requires the presence of SRP9/SRP14 and/or SRP19 to stably interact with RNA. This Solanum lycopersicum (Tomato) protein is Signal recognition particle subunit SRP54 1.